The primary structure comprises 637 residues: Biosynthetic arginine decarboxylase (637 aa).

Lys101 is subject to N6-(pyridoxal phosphate)lysine. 286-296 is a binding site for substrate; the sequence is FDVGGGLAVDY.

This sequence belongs to the Orn/Lys/Arg decarboxylase class-II family. SpeA subfamily. Requires Mg(2+) as cofactor. The cofactor is pyridoxal 5'-phosphate.

It catalyses the reaction L-arginine + H(+) = agmatine + CO2. It participates in amine and polyamine biosynthesis; agmatine biosynthesis; agmatine from L-arginine: step 1/1. Functionally, catalyzes the biosynthesis of agmatine from arginine. In Shewanella halifaxensis (strain HAW-EB4), this protein is Biosynthetic arginine decarboxylase.